We begin with the raw amino-acid sequence, 128 residues long: Small ribosomal subunit protein eS8 (128 aa).

This sequence belongs to the eukaryotic ribosomal protein eS8 family. As to quaternary structure, part of the 30S ribosomal subunit.

In Methanococcus aeolicus (strain ATCC BAA-1280 / DSM 17508 / OCM 812 / Nankai-3), this protein is Small ribosomal subunit protein eS8.